We begin with the raw amino-acid sequence, 139 residues long: Large ribosomal subunit protein uL16 (139 aa).

Belongs to the universal ribosomal protein uL16 family. As to quaternary structure, part of the 50S ribosomal subunit.

In terms of biological role, binds 23S rRNA and is also seen to make contacts with the A and possibly P site tRNAs. The sequence is that of Large ribosomal subunit protein uL16 from Protochlamydia amoebophila (strain UWE25).